The primary structure comprises 256 residues: H-2 class II histocompatibility antigen, A-B alpha chain (256 aa).

An N-terminal signal peptide occupies residues 1–23 (MPRSRALILGVLALTTMLSLCGG). The tract at residues 24 to 111 (EDDIEADHVG…KRSNSTPATN (88 aa)) is alpha-1. The Extracellular portion of the chain corresponds to 24-218 (EDDIEADHVG…IPAPMSELTE (195 aa)). Residues 112-205 (EAPQATVFPK…GLEEPVLKHW (94 aa)) are alpha-2. One can recognise an Ig-like C1-type domain in the interval 114–206 (PQATVFPKSP…LEEPVLKHWE (93 aa)). C134 and C190 are oxidised to a cystine. The N-linked (GlcNAc...) asparagine glycan is linked to N145. The connecting peptide stretch occupies residues 206–218 (EPEIPAPMSELTE). The helical transmembrane segment at 219–244 (TVVCALGLSVGLVGIVVGTIFIIQGL) threads the bilayer. The Cytoplasmic portion of the chain corresponds to 245–256 (RSGGTSRHPGPL).

It belongs to the MHC class II family.

It is found in the membrane. This chain is H-2 class II histocompatibility antigen, A-B alpha chain (H2-Aa), found in Mus musculus (Mouse).